Consider the following 127-residue polypeptide: Flagellar hook-basal body complex protein FliE (127 aa).

The protein belongs to the FliE family.

It is found in the bacterial flagellum basal body. The chain is Flagellar hook-basal body complex protein FliE from Leptospira interrogans serogroup Icterohaemorrhagiae serovar copenhageni (strain Fiocruz L1-130).